Here is a 546-residue protein sequence, read N- to C-terminus: Branchpoint-bridging protein (546 aa).

Disordered regions lie at residues methionine 1 to lysine 141 and threonine 178 to tyrosine 199. Basic and acidic residues predominate over residues arginine 50–proline 128. The region spanning tyrosine 251–isoleucine 330 is the KH domain. 2 CCHC-type zinc fingers span residues glutamine 368–glutamine 385 and valine 393–glycine 410.

Belongs to the BBP/SF1 family.

Its subcellular location is the nucleus. In terms of biological role, necessary for the splicing of pre-mRNA. Has a role in the recognition of the branch site (5'-UACUAAC-3'), the pyrimidine tract and the 3'-splice site at the 3'-end of introns. In Cryptococcus neoformans var. neoformans serotype D (strain B-3501A) (Filobasidiella neoformans), this protein is Branchpoint-bridging protein (BBP).